Consider the following 122-residue polypeptide: Small ribosomal subunit protein uS13 (122 aa).

A disordered region spans residues 95-122; it reads QLPVRGQRTHTNARTRKGKAKPIAGKKK.

It belongs to the universal ribosomal protein uS13 family. In terms of assembly, part of the 30S ribosomal subunit. Forms a loose heterodimer with protein S19. Forms two bridges to the 50S subunit in the 70S ribosome.

Its function is as follows. Located at the top of the head of the 30S subunit, it contacts several helices of the 16S rRNA. In the 70S ribosome it contacts the 23S rRNA (bridge B1a) and protein L5 of the 50S subunit (bridge B1b), connecting the 2 subunits; these bridges are implicated in subunit movement. Contacts the tRNAs in the A and P-sites. The chain is Small ribosomal subunit protein uS13 from Beijerinckia indica subsp. indica (strain ATCC 9039 / DSM 1715 / NCIMB 8712).